Consider the following 20-residue polypeptide: Antifungal protein (20 aa).

This sequence belongs to the protease inhibitor I3 (leguminous Kunitz-type inhibitor) family.

Functionally, inhibits soybean trypsin. Has antifungal activity against R.cerealis, A.brassicae and A.niger, and weak antifungal activity against F.oxysporum. The polypeptide is Antifungal protein (Cullen corylifolium (Malaysian scurfpea)).